The following is a 468-amino-acid chain: 6-phosphogluconate dehydrogenase, decarboxylating (468 aa).

NADP(+) contacts are provided by residues 10 to 15, 33 to 35, 74 to 76, and Asn-102; these read GMAVMG, NRS, and VKA. Substrate is bound by residues Asn-102 and 128–130; that span reads SGG. Lys-183 functions as the Proton acceptor in the catalytic mechanism. Residue 186 to 187 participates in substrate binding; that stretch reads HN. Glu-190 functions as the Proton donor in the catalytic mechanism. Substrate is bound by residues Tyr-191, Lys-260, Arg-287, Arg-445, and His-451.

This sequence belongs to the 6-phosphogluconate dehydrogenase family. In terms of assembly, homodimer.

The catalysed reaction is 6-phospho-D-gluconate + NADP(+) = D-ribulose 5-phosphate + CO2 + NADPH. The protein operates within carbohydrate degradation; pentose phosphate pathway; D-ribulose 5-phosphate from D-glucose 6-phosphate (oxidative stage): step 3/3. In terms of biological role, catalyzes the oxidative decarboxylation of 6-phosphogluconate to ribulose 5-phosphate and CO(2), with concomitant reduction of NADP to NADPH. This is 6-phosphogluconate dehydrogenase, decarboxylating (gnd) from Salmonella typhimurium (strain LT2 / SGSC1412 / ATCC 700720).